Here is a 150-residue protein sequence, read N- to C-terminus: Deoxyuridine 5'-triphosphate nucleotidohydrolase (150 aa).

Residues 69–71 (RSG), Asn82, 86–88 (TID), and Lys96 each bind substrate.

The protein belongs to the dUTPase family. Requires Mg(2+) as cofactor.

The enzyme catalyses dUTP + H2O = dUMP + diphosphate + H(+). The protein operates within pyrimidine metabolism; dUMP biosynthesis; dUMP from dCTP (dUTP route): step 2/2. In terms of biological role, this enzyme is involved in nucleotide metabolism: it produces dUMP, the immediate precursor of thymidine nucleotides and it decreases the intracellular concentration of dUTP so that uracil cannot be incorporated into DNA. In Aquifex aeolicus (strain VF5), this protein is Deoxyuridine 5'-triphosphate nucleotidohydrolase.